A 263-amino-acid polypeptide reads, in one-letter code: MKIAVTGKGGVGKSTIVGMLARALSDEGWRVMAIDADPDANLASAIGVPAERLSALLPISKMTGLARERTGASETTGTHFILNPRVDDIPEQFCVDHAGIKLLLMGTVNHAGSGCVCPEHALVRTLLRHILTKRKECVLIDMEAGIEHFGRGTIEAVDLLVIVIEPGSRSLQTAAQIEGLARDLGIKTICHIANKLASPVDVGFILDRADQFDLLGSIPFDSAIQAADQAGLSCYDLSPACRDKAHALMAALLERVGPTQGVS.

7–14 (GKGGVGKS) is a binding site for ATP.

Involved in the insertion of nickel into the carbon monoxide dehydrogenase (CODH). In Rhodospirillum rubrum, this protein is Carbon monoxide dehydrogenase accessory protein CooC (cooC).